The chain runs to 83 residues: MFLQAVTSPISINSLMVLAAYVLLGGLYLIVVPLLLYSWMNRRWHCMGKFERLSAYGMVFLFFPGLILFAPFLNLRLNGQGEV.

2 consecutive transmembrane segments (helical) span residues 15 to 35 (LMVLAAYVLLGGLYLIVVPLL) and 53 to 73 (LSAYGMVFLFFPGLILFAPFL).

The protein belongs to the complex I NdhL subunit family. In terms of assembly, NDH-1 can be composed of about 15 different subunits; different subcomplexes with different compositions have been identified which probably have different functions.

Its subcellular location is the cellular thylakoid membrane. The enzyme catalyses a plastoquinone + NADH + (n+1) H(+)(in) = a plastoquinol + NAD(+) + n H(+)(out). It catalyses the reaction a plastoquinone + NADPH + (n+1) H(+)(in) = a plastoquinol + NADP(+) + n H(+)(out). NDH-1 shuttles electrons from an unknown electron donor, via FMN and iron-sulfur (Fe-S) centers, to quinones in the respiratory and/or the photosynthetic chain. The immediate electron acceptor for the enzyme in this species is believed to be plastoquinone. Couples the redox reaction to proton translocation, and thus conserves the redox energy in a proton gradient. Cyanobacterial NDH-1 also plays a role in inorganic carbon-concentration. The sequence is that of NAD(P)H-quinone oxidoreductase subunit L from Prochlorococcus marinus (strain MIT 9303).